Reading from the N-terminus, the 215-residue chain is Ribonuclease (215 aa).

A signal peptide spans 1-22 (MKKIVVLLGMLLAPWFSSAVQA). Active-site residues include His62, Glu102, and His106. The segment at 144-166 (KPLPAQGGSGQCQRLAGPGQHHG) is disordered.

The protein belongs to the RNase T2 family.

It is found in the periplasm. It localises to the cytoplasm. In terms of biological role, one of the few RNases that cleave the phosphodiester bond between any two nucleotide. Shows a preference for adenylic acid. This chain is Ribonuclease, found in Aeromonas hydrophila.